Reading from the N-terminus, the 269-residue chain is Tryptophan synthase alpha chain (269 aa).

Active-site proton acceptor residues include Glu-49 and Asp-60.

The protein belongs to the TrpA family. Tetramer of two alpha and two beta chains.

It catalyses the reaction (1S,2R)-1-C-(indol-3-yl)glycerol 3-phosphate + L-serine = D-glyceraldehyde 3-phosphate + L-tryptophan + H2O. It functions in the pathway amino-acid biosynthesis; L-tryptophan biosynthesis; L-tryptophan from chorismate: step 5/5. The alpha subunit is responsible for the aldol cleavage of indoleglycerol phosphate to indole and glyceraldehyde 3-phosphate. This chain is Tryptophan synthase alpha chain, found in Actinobacillus succinogenes (strain ATCC 55618 / DSM 22257 / CCUG 43843 / 130Z).